Here is a 96-residue protein sequence, read N- to C-terminus: NADH-ubiquinone oxidoreductase chain 6 (96 aa).

2 consecutive transmembrane segments (helical) span residues 24 to 44 and 48 to 68; these read MSLL…LGSI and WFAY…FIYV.

The protein belongs to the complex I subunit 6 family.

The protein localises to the mitochondrion membrane. The catalysed reaction is a ubiquinone + NADH + 5 H(+)(in) = a ubiquinol + NAD(+) + 4 H(+)(out). Functionally, core subunit of the mitochondrial membrane respiratory chain NADH dehydrogenase (Complex I) that is believed to belong to the minimal assembly required for catalysis. Complex I functions in the transfer of electrons from NADH to the respiratory chain. The immediate electron acceptor for the enzyme is believed to be ubiquinone. In Albinaria turrita (Door snail), this protein is NADH-ubiquinone oxidoreductase chain 6 (ND6).